The chain runs to 351 residues: Large ribosomal subunit protein uL3 (351 aa).

2 disordered regions span residues 1–31 and 246–271; these read MGHR…TPRT and KGSR…GQLG.

This sequence belongs to the universal ribosomal protein uL3 family. In terms of assembly, part of the 50S ribosomal subunit. Forms a cluster with proteins L14 and L24e.

Its function is as follows. One of the primary rRNA binding proteins, it binds directly near the 3'-end of the 23S rRNA, where it nucleates assembly of the 50S subunit. This is Large ribosomal subunit protein uL3 from Saccharolobus islandicus (strain M.16.27) (Sulfolobus islandicus).